The sequence spans 274 residues: MADMHSLFIAFVLGVVEGLTEFLPVSSTGHMIIVGEWLGFTGDKAKTFEVIIQLGSILAVVVMFWRRLFGLIGIHFGGKPVEHEGKTTGHLKLGHILLAMIPAVVLGLLFHDVIKSLFAPKNVMYALVVGGFLLLAAEWLKPKKPSAEGLDDITYRQAFMIGCFQCLALWPGFSRSGSTIAGGMLVGVNRYAAAEFSFILAVPMMIGASGLDLYKSLHFLTMGDLPMFAVGFATAFVVALIAIKTFLTLIKRISFVPFAIYRFIVAGVVYMVFM.

8 consecutive transmembrane segments (helical) span residues Ser-6–Ser-26, Ala-45–Trp-65, Gly-94–Ile-114, Leu-117–Ala-137, Tyr-155–Ser-174, Tyr-191–Leu-211, Gly-223–Ile-243, and Ile-253–Phe-273.

The protein belongs to the UppP family.

It is found in the cell inner membrane. It catalyses the reaction di-trans,octa-cis-undecaprenyl diphosphate + H2O = di-trans,octa-cis-undecaprenyl phosphate + phosphate + H(+). Catalyzes the dephosphorylation of undecaprenyl diphosphate (UPP). Confers resistance to bacitracin. This Serratia proteamaculans (strain 568) protein is Undecaprenyl-diphosphatase.